The sequence spans 488 residues: MTKTERYIQLRSMIPEMRRIKRIHFVGIGGAGMGGIAEVLVNEGYQVSGSDIAQNTVTDRLCLLGAKIQIGHAADNVQQVDVVVVSTAINAENPEIIAAKELRIPIVRRAEMLAELMRYRHGVAIAGTHGKTTTTSLIASVYGQAGRDPTFVIGGLLNSAGTNARLGTSRYLIAEADESDASFLHLQPMVSVVTNIEADHMDTYGGDFEKLKSTFVDFLHNLPFYGVAVVCIDDPVVREIMPRIGRHLVTYGFSDDADVQALNFSQQGHQCRFTVRRKGKEDLDLLLNLPGQHNVLNALAAIAVATEDEIDDSALIQALAEFQGIGRRFQHLGKFATPKGEVMLVDDYGHHPSEVAATIKAARAGWPEKRLVMAYQPHRYTRTRDLYEDFIEVLSQVDCLLLLDVYSAGEAPITGADGRALCRSIRLRGQLDPIFIASPDQLAEVLPDVLQEGDLLLTQGAGNIGALSRQLAVTELGFAKVEIAQVPA.

Position 127–133 (127–133) interacts with ATP; sequence GTHGKTT.

This sequence belongs to the MurCDEF family.

The protein localises to the cytoplasm. It catalyses the reaction UDP-N-acetyl-alpha-D-muramate + L-alanine + ATP = UDP-N-acetyl-alpha-D-muramoyl-L-alanine + ADP + phosphate + H(+). It participates in cell wall biogenesis; peptidoglycan biosynthesis. In terms of biological role, cell wall formation. The chain is UDP-N-acetylmuramate--L-alanine ligase from Shewanella putrefaciens (strain CN-32 / ATCC BAA-453).